The primary structure comprises 243 residues: uncharacterized protein (243 aa).

[4Fe-4S] cluster contacts are provided by Cys-120 and Cys-157.

Homodimer. [4Fe-4S] cluster serves as cofactor.

This is an uncharacterized protein from Methanocaldococcus jannaschii (strain ATCC 43067 / DSM 2661 / JAL-1 / JCM 10045 / NBRC 100440) (Methanococcus jannaschii).